The sequence spans 369 residues: Probable dual-specificity RNA methyltransferase RlmN (369 aa).

The active-site Proton acceptor is the Glu-98. Residues 106 to 341 (STSRNTLCIS…VTVRKSRGAD (236 aa)) enclose the Radical SAM core domain. The cysteines at positions 113 and 346 are disulfide-linked. [4Fe-4S] cluster contacts are provided by Cys-120, Cys-124, and Cys-127. S-adenosyl-L-methionine is bound by residues 171 to 172 (GE), Ser-204, 227 to 229 (SLH), and Asn-303. Catalysis depends on Cys-346, which acts as the S-methylcysteine intermediate.

Belongs to the radical SAM superfamily. RlmN family. It depends on [4Fe-4S] cluster as a cofactor.

It localises to the cytoplasm. It catalyses the reaction adenosine(2503) in 23S rRNA + 2 reduced [2Fe-2S]-[ferredoxin] + 2 S-adenosyl-L-methionine = 2-methyladenosine(2503) in 23S rRNA + 5'-deoxyadenosine + L-methionine + 2 oxidized [2Fe-2S]-[ferredoxin] + S-adenosyl-L-homocysteine. The enzyme catalyses adenosine(37) in tRNA + 2 reduced [2Fe-2S]-[ferredoxin] + 2 S-adenosyl-L-methionine = 2-methyladenosine(37) in tRNA + 5'-deoxyadenosine + L-methionine + 2 oxidized [2Fe-2S]-[ferredoxin] + S-adenosyl-L-homocysteine. Its function is as follows. Specifically methylates position 2 of adenine 2503 in 23S rRNA and position 2 of adenine 37 in tRNAs. The polypeptide is Probable dual-specificity RNA methyltransferase RlmN (Chloroherpeton thalassium (strain ATCC 35110 / GB-78)).